The primary structure comprises 141 residues: Nucleoside diphosphate kinase (141 aa).

ATP is bound by residues Lys11, Phe59, Arg87, Thr93, Arg104, and Asn114. His117 (pros-phosphohistidine intermediate) is an active-site residue.

It belongs to the NDK family. Homotetramer. Mg(2+) is required as a cofactor.

Its subcellular location is the cytoplasm. The catalysed reaction is a 2'-deoxyribonucleoside 5'-diphosphate + ATP = a 2'-deoxyribonucleoside 5'-triphosphate + ADP. The enzyme catalyses a ribonucleoside 5'-diphosphate + ATP = a ribonucleoside 5'-triphosphate + ADP. Functionally, major role in the synthesis of nucleoside triphosphates other than ATP. The ATP gamma phosphate is transferred to the NDP beta phosphate via a ping-pong mechanism, using a phosphorylated active-site intermediate. The protein is Nucleoside diphosphate kinase of Polaromonas sp. (strain JS666 / ATCC BAA-500).